Here is a 701-residue protein sequence, read N- to C-terminus: Ribosomal RNA large subunit methyltransferase K/L (701 aa).

Residues 43–154 (LLYQSLMWSR…KETAHISLDL (112 aa)) enclose the THUMP domain.

The protein belongs to the methyltransferase superfamily. RlmKL family.

Its subcellular location is the cytoplasm. The catalysed reaction is guanosine(2445) in 23S rRNA + S-adenosyl-L-methionine = N(2)-methylguanosine(2445) in 23S rRNA + S-adenosyl-L-homocysteine + H(+). It carries out the reaction guanosine(2069) in 23S rRNA + S-adenosyl-L-methionine = N(2)-methylguanosine(2069) in 23S rRNA + S-adenosyl-L-homocysteine + H(+). Specifically methylates the guanine in position 2445 (m2G2445) and the guanine in position 2069 (m7G2069) of 23S rRNA. The chain is Ribosomal RNA large subunit methyltransferase K/L from Klebsiella pneumoniae (strain 342).